Here is a 77-residue protein sequence, read N- to C-terminus: Acyl carrier protein (77 aa).

One can recognise a Carrier domain in the interval methionine 1–glutamine 76. Position 36 is an O-(pantetheine 4'-phosphoryl)serine (serine 36).

The protein belongs to the acyl carrier protein (ACP) family. Post-translationally, 4'-phosphopantetheine is transferred from CoA to a specific serine of apo-ACP by AcpS. This modification is essential for activity because fatty acids are bound in thioester linkage to the sulfhydryl of the prosthetic group.

It localises to the cytoplasm. The protein operates within lipid metabolism; fatty acid biosynthesis. Functionally, carrier of the growing fatty acid chain in fatty acid biosynthesis. The sequence is that of Acyl carrier protein from Sulfurihydrogenibium sp. (strain YO3AOP1).